The following is a 430-amino-acid chain: Trigger factor (430 aa).

A PPIase FKBP-type domain is found at 157 to 242 (GDLVALETWS…AVEVSEPVLP (86 aa)).

This sequence belongs to the FKBP-type PPIase family. Tig subfamily.

It localises to the cytoplasm. The enzyme catalyses [protein]-peptidylproline (omega=180) = [protein]-peptidylproline (omega=0). Involved in protein export. Acts as a chaperone by maintaining the newly synthesized protein in an open conformation. Functions as a peptidyl-prolyl cis-trans isomerase. The polypeptide is Trigger factor (Xanthomonas campestris pv. campestris (strain ATCC 33913 / DSM 3586 / NCPPB 528 / LMG 568 / P 25)).